A 98-amino-acid chain; its full sequence is Large ribosomal subunit protein uL23 (98 aa).

The protein belongs to the universal ribosomal protein uL23 family. Part of the 50S ribosomal subunit. Contacts protein L29, and trigger factor when it is bound to the ribosome.

Functionally, one of the early assembly proteins it binds 23S rRNA. One of the proteins that surrounds the polypeptide exit tunnel on the outside of the ribosome. Forms the main docking site for trigger factor binding to the ribosome. The polypeptide is Large ribosomal subunit protein uL23 (Bordetella petrii (strain ATCC BAA-461 / DSM 12804 / CCUG 43448)).